A 245-amino-acid chain; its full sequence is MELNNIPKYSIRGLNIWGFRDMAHFLDHIFQREQVKTGTMVAINAEKVLTAEEDTALSTLLSDAEYLYADGISIVRAIRRKYPDTEVSRVAGADLWEAIMERAGKEGTPIFLVGGKPEILKQTESKLRAQWNVNIVGSQNGYFTPEERNAVFERIHASGAVIVTVAMGSPKQEIFMRDCRKIHSNALYMGVGGTYDVFTGHVKRAPKAWQNLGLEWLYRLLSQPSRIRRQFKLLKFIGYYYSGRL.

The protein belongs to the glycosyltransferase 26 family.

The enzyme catalyses UDP-N-acetyl-alpha-D-mannosaminouronate + N-acetyl-alpha-D-glucosaminyl-di-trans,octa-cis-undecaprenyl diphosphate = beta-D-ManNAcA-(1-&gt;4)-alpha-D-GlcNAc-di-trans,octa-cis-undecaprenyl diphosphate + UDP + H(+). It participates in bacterial outer membrane biogenesis; enterobacterial common antigen biosynthesis. Catalyzes the synthesis of Und-PP-GlcNAc-ManNAcA (Lipid II), the second lipid-linked intermediate involved in enterobacterial common antigen (ECA) synthesis. The chain is UDP-N-acetyl-D-mannosaminuronic acid transferase from Photorhabdus laumondii subsp. laumondii (strain DSM 15139 / CIP 105565 / TT01) (Photorhabdus luminescens subsp. laumondii).